Reading from the N-terminus, the 226-residue chain is Glycerol-3-phosphate acyltransferase (226 aa).

Transmembrane regions (helical) follow at residues 1 to 21 (MGFWLSLCGAVVLVAYLLGSF), 60 to 80 (FVLGLDCLKGVLAIALVYYLF), 102 to 122 (LVTLAGIAAILGHSKSIFLGF), 134 to 154 (ILLAMNWQVGLATFGVFAVVV), 159 to 178 (IVSLSSIMGAIAVSIVMVFL), and 182 to 197 (LPYILFGIAGGLYVIL).

Belongs to the PlsY family. In terms of assembly, probably interacts with PlsX.

Its subcellular location is the cell inner membrane. It catalyses the reaction an acyl phosphate + sn-glycerol 3-phosphate = a 1-acyl-sn-glycero-3-phosphate + phosphate. It functions in the pathway lipid metabolism; phospholipid metabolism. In terms of biological role, catalyzes the transfer of an acyl group from acyl-phosphate (acyl-PO(4)) to glycerol-3-phosphate (G3P) to form lysophosphatidic acid (LPA). This enzyme utilizes acyl-phosphate as fatty acyl donor, but not acyl-CoA or acyl-ACP. The chain is Glycerol-3-phosphate acyltransferase from Nostoc sp. (strain PCC 7120 / SAG 25.82 / UTEX 2576).